The primary structure comprises 265 residues: 5'-nucleotidase SurE (265 aa).

4 residues coordinate a divalent metal cation: D9, D10, S40, and N96.

It belongs to the SurE nucleotidase family. A divalent metal cation is required as a cofactor.

It is found in the cytoplasm. The enzyme catalyses a ribonucleoside 5'-phosphate + H2O = a ribonucleoside + phosphate. Functionally, nucleotidase that shows phosphatase activity on nucleoside 5'-monophosphates. This chain is 5'-nucleotidase SurE, found in Methanothrix thermoacetophila (strain DSM 6194 / JCM 14653 / NBRC 101360 / PT) (Methanosaeta thermophila).